Reading from the N-terminus, the 20-residue chain is MLASGLLLVALLACLTVMVL.

The protein belongs to the cytochrome P450 family. Requires heme as cofactor.

Its subcellular location is the endoplasmic reticulum membrane. The protein resides in the microsome membrane. It catalyses the reaction an organic molecule + reduced [NADPH--hemoprotein reductase] + O2 = an alcohol + oxidized [NADPH--hemoprotein reductase] + H2O + H(+). In terms of biological role, exhibits a high coumarin 7-hydroxylase activity. This is Cytochrome P450 2A7 (CYP2A7) from Papio sp. (Baboon).